A 102-amino-acid polypeptide reads, in one-letter code: Iron-sulfur cluster assembly protein CyaY (102 aa).

This sequence belongs to the frataxin family.

Involved in iron-sulfur (Fe-S) cluster assembly. May act as a regulator of Fe-S biogenesis. The chain is Iron-sulfur cluster assembly protein CyaY from Mannheimia succiniciproducens (strain KCTC 0769BP / MBEL55E).